A 628-amino-acid chain; its full sequence is Eukaryotic peptide chain release factor GTP-binding subunit ERF3B (628 aa).

A compositionally biased stretch (low complexity) spans Met-1–Ser-10. 3 disordered regions span residues Met-1–Leu-44, Ser-71–Ser-124, and Leu-146–Ser-191. Residues Lys-201–Arg-425 form the tr-type G domain. Positions Gly-210–Ser-217 are G1. Asp-213–Thr-218 contributes to the GTP binding site. Positions Gly-266–Glu-270 are G2. The G3 stretch occupies residues Asp-287–Gly-290. Residues Asn-349–Asp-352 and Ser-391–Leu-393 contribute to the GTP site. The segment at Asn-349–Asp-352 is G4. The tract at residues Ser-391–Leu-393 is G5.

Belongs to the TRAFAC class translation factor GTPase superfamily. Classic translation factor GTPase family. ERF3 subfamily. Component of the eRF1-eRF3-GTP ternary complex, composed of ETF1/ERF1 and ERF3 (GSPT1/ERF3A or GSPT2/ERF3B) and GTP. Component of the transient SURF (SMG1-UPF1-eRF1-eRF3) complex. Interacts with UPF1 and PABPC1.

Its subcellular location is the cytoplasm. It catalyses the reaction GTP + H2O = GDP + phosphate + H(+). GTPase component of the eRF1-eRF3-GTP ternary complex, a ternary complex that mediates translation termination in response to the termination codons UAA, UAG and UGA. GSPT2/ERF3B mediates ETF1/ERF1 delivery to stop codons: The eRF1-eRF3-GTP complex binds to a stop codon in the ribosomal A-site. GTP hydrolysis by GSPT2/ERF3B induces a conformational change that leads to its dissociation, permitting ETF1/ERF1 to accommodate fully in the A-site. Component of the transient SURF complex which recruits UPF1 to stalled ribosomes in the context of nonsense-mediated decay (NMD) of mRNAs containing premature stop codons. This chain is Eukaryotic peptide chain release factor GTP-binding subunit ERF3B (GSPT2), found in Pongo abelii (Sumatran orangutan).